Here is a 403-residue protein sequence, read N- to C-terminus: S-adenosylmethionine synthase (403 aa).

His17 serves as a coordination point for ATP. Position 19 (Asp19) interacts with Mg(2+). Residue Glu45 participates in K(+) binding. L-methionine contacts are provided by Glu58 and Gln101. The interval Gln101–Arg111 is flexible loop. Residues Asp177–Lys179, Arg244–Phe245, Asp253, Arg259–Lys260, Ala276, and Lys280 contribute to the ATP site. Asp253 provides a ligand contact to L-methionine. Lys284 contributes to the L-methionine binding site.

Belongs to the AdoMet synthase family. Homotetramer; dimer of dimers. It depends on Mg(2+) as a cofactor. K(+) is required as a cofactor.

The protein localises to the cytoplasm. The enzyme catalyses L-methionine + ATP + H2O = S-adenosyl-L-methionine + phosphate + diphosphate. It functions in the pathway amino-acid biosynthesis; S-adenosyl-L-methionine biosynthesis; S-adenosyl-L-methionine from L-methionine: step 1/1. Its function is as follows. Catalyzes the formation of S-adenosylmethionine (AdoMet) from methionine and ATP. The overall synthetic reaction is composed of two sequential steps, AdoMet formation and the subsequent tripolyphosphate hydrolysis which occurs prior to release of AdoMet from the enzyme. This is S-adenosylmethionine synthase from Geobacillus kaustophilus (strain HTA426).